The sequence spans 182 residues: Putative manganese efflux pump MntP (182 aa).

The next 6 helical transmembrane spans lie at 6–26 (LIPL…VSLG), 37–57 (ILYI…IGMV), 71–91 (HFAG…SSIL), 101–121 (IGIS…SVGL), 131–151 (VITI…GLFI), and 162–182 (YGEI…LFPI).

It belongs to the MntP (TC 9.B.29) family.

The protein resides in the cell membrane. Functionally, probably functions as a manganese efflux pump. This chain is Putative manganese efflux pump MntP, found in Bacillus cereus (strain AH187).